Reading from the N-terminus, the 255-residue chain is tRNA pseudouridine synthase A (255 aa).

Catalysis depends on aspartate 53, which acts as the Nucleophile. Tyrosine 113 is a binding site for substrate.

This sequence belongs to the tRNA pseudouridine synthase TruA family. In terms of assembly, homodimer.

The catalysed reaction is uridine(38/39/40) in tRNA = pseudouridine(38/39/40) in tRNA. Formation of pseudouridine at positions 38, 39 and 40 in the anticodon stem and loop of transfer RNAs. This chain is tRNA pseudouridine synthase A, found in Acidiphilium cryptum (strain JF-5).